Consider the following 262-residue polypeptide: MLIFDSGVGGLSILKNIKKILPNIHYIYMLDNESFPYGNKTEFFIIQRSIKIIHTIKKIYPINIVVIACNTISTVALSILREKFDIPIFGIFPHIKAAEKITKNKIIGLIATKATINSSYTQKIIYEYSCSNTIKIIGTNKLAVIAEKKIRGVAVSQKKLKNIFRPWINLPTCPDTIILGCTHFSLLEKEIKNILYKTRSVYFIDSIKKVIFQIKSCLKTSNVNQKIKKNIFLYSKNNNNLKKLLSFLKQYKFTVIKHINLN.

Substrate-binding positions include 5–6 and 37–38; these read DS and YG. Cys-69 acts as the Proton donor/acceptor in catalysis. 70 to 71 is a substrate binding site; sequence NT. Cys-181 (proton donor/acceptor) is an active-site residue. A substrate-binding site is contributed by 182–183; the sequence is TH.

The protein belongs to the aspartate/glutamate racemases family.

The enzyme catalyses L-glutamate = D-glutamate. The protein operates within cell wall biogenesis; peptidoglycan biosynthesis. Its function is as follows. Provides the (R)-glutamate required for cell wall biosynthesis. In Buchnera aphidicola subsp. Acyrthosiphon pisum (strain Tuc7), this protein is Glutamate racemase.